We begin with the raw amino-acid sequence, 310 residues long: N-acetyl-gamma-glutamyl-phosphate reductase (310 aa).

Cys-117 is an active-site residue.

It belongs to the NAGSA dehydrogenase family. Type 2 subfamily.

The protein resides in the cytoplasm. The catalysed reaction is N-acetyl-L-glutamate 5-semialdehyde + phosphate + NADP(+) = N-acetyl-L-glutamyl 5-phosphate + NADPH + H(+). Its pathway is amino-acid biosynthesis; L-arginine biosynthesis; N(2)-acetyl-L-ornithine from L-glutamate: step 3/4. Catalyzes the NADPH-dependent reduction of N-acetyl-5-glutamyl phosphate to yield N-acetyl-L-glutamate 5-semialdehyde. This is N-acetyl-gamma-glutamyl-phosphate reductase from Brucella suis (strain ATCC 23445 / NCTC 10510).